The following is a 130-amino-acid chain: Small ribosomal subunit protein uS9 (130 aa).

It belongs to the universal ribosomal protein uS9 family.

The sequence is that of Small ribosomal subunit protein uS9 (rpsI) from Shigella flexneri.